A 178-amino-acid chain; its full sequence is Large ribosomal subunit protein uL6 (178 aa).

Belongs to the universal ribosomal protein uL6 family. As to quaternary structure, part of the 50S ribosomal subunit.

Functionally, this protein binds to the 23S rRNA, and is important in its secondary structure. It is located near the subunit interface in the base of the L7/L12 stalk, and near the tRNA binding site of the peptidyltransferase center. The protein is Large ribosomal subunit protein uL6 of Exiguobacterium sibiricum (strain DSM 17290 / CCUG 55495 / CIP 109462 / JCM 13490 / 255-15).